Here is an 83-residue protein sequence, read N- to C-terminus: Small ribosomal subunit protein bS16 (83 aa).

The protein belongs to the bacterial ribosomal protein bS16 family.

The chain is Small ribosomal subunit protein bS16 from Thermosynechococcus vestitus (strain NIES-2133 / IAM M-273 / BP-1).